Here is a 236-residue protein sequence, read N- to C-terminus: Flagellar L-ring protein (236 aa).

A signal peptide spans 1-24; sequence MKNKNRLNTIKLLSISLLIAVTTA. The N-palmitoyl cysteine moiety is linked to residue cysteine 25. Residue cysteine 25 is the site of S-diacylglycerol cysteine attachment.

The protein belongs to the FlgH family. In terms of assembly, the basal body constitutes a major portion of the flagellar organelle and consists of four rings (L,P,S, and M) mounted on a central rod.

It localises to the cell outer membrane. The protein localises to the bacterial flagellum basal body. Assembles around the rod to form the L-ring and probably protects the motor/basal body from shearing forces during rotation. This Colwellia psychrerythraea (strain 34H / ATCC BAA-681) (Vibrio psychroerythus) protein is Flagellar L-ring protein.